A 163-amino-acid chain; its full sequence is Putative pre-16S rRNA nuclease (163 aa).

It belongs to the YqgF nuclease family.

The protein resides in the cytoplasm. Could be a nuclease involved in processing of the 5'-end of pre-16S rRNA. The sequence is that of Putative pre-16S rRNA nuclease from Zymomonas mobilis subsp. mobilis (strain ATCC 31821 / ZM4 / CP4).